Here is a 903-residue protein sequence, read N- to C-terminus: MIKESSSPALDADKIEVPSPKDENNSSNSEAATDNEDFEISDDDDDDRNHKHRKREARPQSFDENTEQSPGGPLKKRHKISGGADSHGEAQKDFFPKFKRRPGAGAHSRAPRVNPSFRDSSASVAARAPMTRGRGRNGAPWAQHEPRFNTLEMIDFASQMASQGPPTHPSLFMGPALPSGGSAQNGSWGPYGFMPGMPNGMLDPIHPLGMQGPIQPAISPLIDLGMPRQRCRDFEERGFCLRGDMCPMEHGLNRIVVEDMQSLSQFNLPVTVPNTQGLGIQNEPGTAPVNTSSLGGSKGVPAKDIKSAVTNDVLKLNGTTALAVSDADVYDPDQPLWNNEHPDASAGFAHTDGVWNAESLGYEAAREQGNQVLAADSSQNSKSSVWGRIASKKLGHGKTANATSTSATGNKRNESYDEMAPSTVHVNPASAKDSNGQSNSRIFGDVGRQSNRASHKASRTLYVNGIPLESNRWEALLSHFQKFGQVIDIYIPSNSEKAFVQFSKREEAEAALKAPDAVMGNRFIKLWWANRDRIPDEVEGRIPAKSSHMSAALANSVPQPSSSNRGKENLQSATPRASSGSSAEASGPGTGHKMLPANSVKSLPPDTKRQESLELLEELRKKQEILAQKRDEFRRQLEKLAKQKGLANSAKQAEAGGKEVASNDVHRVTDSKSMNTGTEGPRDAAGTLQNRTSGELASSSHKSSATSAQKPAVATKQTSPLLVPSQNRFKLDNRTTSFRILPPLPPEIADESVLKDHFMSFGELSSVVLEDTEAYNHDATLKPSLSCSACVTYTTRQSAEKAFIGGKSCKGHTLRFMWLTASPGSTNHSRFQKTSIPARASSFSSQTQNMPSESSTTVGKMSSTVKSSTTAKPHSESMPTATSAKTSVEIPKALSSRDSDVSQ.

The disordered stretch occupies residues 1 to 144; sequence MIKESSSPAL…GRNGAPWAQH (144 aa). Positions 11–24 are enriched in basic and acidic residues; the sequence is DADKIEVPSPKDEN. A compositionally biased stretch (acidic residues) spans 33–46; sequence TDNEDFEISDDDDD. Basic and acidic residues predominate over residues 86 to 96; that stretch reads SHGEAQKDFFP. The segment at 225–253 adopts a C3H1-type zinc-finger fold; sequence GMPRQRCRDFEERGFCLRGDMCPMEHGLN. The interval 390-456 is disordered; the sequence is ASKKLGHGKT…GRQSNRASHK (67 aa). Low complexity predominate over residues 397–410; it reads GKTANATSTSATGN. Positions 432–441 are enriched in polar residues; sequence KDSNGQSNSR. Positions 459–531 constitute an RRM domain; that stretch reads RTLYVNGIPL…RFIKLWWANR (73 aa). 3 disordered regions span residues 545–609, 642–720, and 826–903; these read KSSH…DTKR, KQKG…QTSP, and TNHS…DVSQ. A compositionally biased stretch (polar residues) spans 556 to 576; that stretch reads SVPQPSSSNRGKENLQSATPR. Over residues 577–587 the composition is skewed to low complexity; the sequence is ASSGSSAEASG. Residues 608 to 649 are a coiled coil; it reads KRQESLELLEELRKKQEILAQKRDEFRRQLEKLAKQKGLANS. A compositionally biased stretch (low complexity) spans 693-708; sequence SGELASSSHKSSATSA. Over residues 826–886 the composition is skewed to polar residues; it reads TNHSRFQKTS…SMPTATSAKT (61 aa).

The protein is Zinc finger CCCH domain-containing protein 27 of Oryza sativa subsp. japonica (Rice).